A 155-amino-acid chain; its full sequence is MYSMQLASCVALTLVLLVNSAPTSSPAKETQQHLEQLLLDLQVLLRGIDNYKNLKLPMMLTFKFYLPKQATELKHLQCLENELGALQRVLDLTQSKSFHLEDAGNFISNIRVTVVKLKGSENKFECQFDDEPATVVEFLRRWIAICQSIISTMTQ.

The first 20 residues, Met1–Ser20, serve as a signal peptide directing secretion. A glycan (O-linked (GalNAc...) threonine) is linked at Thr23. An intrachain disulfide couples Cys78 to Cys126.

This sequence belongs to the IL-2 family.

The protein resides in the secreted. Cytokine produced by activated CD4-positive helper T-cells and to a lesser extend activated CD8-positive T-cells and natural killer (NK) cells that plays pivotal roles in the immune response and tolerance. Binds to a receptor complex composed of either the high-affinity trimeric IL-2R (IL2RA/CD25, IL2RB/CD122 and IL2RG/CD132) or the low-affinity dimeric IL-2R (IL2RB and IL2RG). Interaction with the receptor leads to oligomerization and conformation changes in the IL-2R subunits resulting in downstream signaling starting with phosphorylation of JAK1 and JAK3. In turn, JAK1 and JAK3 phosphorylate the receptor to form a docking site leading to the phosphorylation of several substrates including STAT5. This process leads to activation of several pathways including STAT, phosphoinositide-3-kinase/PI3K and mitogen-activated protein kinase/MAPK pathways. Functions as a T-cell growth factor and can increase NK-cell cytolytic activity as well. Promotes strong proliferation of activated B-cells and subsequently immunoglobulin production. Plays a pivotal role in regulating the adaptive immune system by controlling the survival and proliferation of regulatory T-cells, which are required for the maintenance of immune tolerance. Moreover, participates in the differentiation and homeostasis of effector T-cell subsets, including Th1, Th2, Th17 as well as memory CD8-positive T-cells. This is Interleukin-2 (Il2) from Rattus norvegicus (Rat).